We begin with the raw amino-acid sequence, 291 residues long: ATP synthase gamma chain (291 aa).

The protein belongs to the ATPase gamma chain family. As to quaternary structure, F-type ATPases have 2 components, CF(1) - the catalytic core - and CF(0) - the membrane proton channel. CF(1) has five subunits: alpha(3), beta(3), gamma(1), delta(1), epsilon(1). CF(0) has three main subunits: a, b and c.

Its subcellular location is the cell membrane. In terms of biological role, produces ATP from ADP in the presence of a proton gradient across the membrane. The gamma chain is believed to be important in regulating ATPase activity and the flow of protons through the CF(0) complex. This chain is ATP synthase gamma chain, found in Streptococcus equi subsp. equi (strain 4047).